Here is a 260-residue protein sequence, read N- to C-terminus: Acetylglutamate kinase (260 aa).

Residues 41–42, Arg-63, and Asn-156 contribute to the substrate site; that span reads GG.

The protein belongs to the acetylglutamate kinase family. ArgB subfamily.

The protein localises to the cytoplasm. The catalysed reaction is N-acetyl-L-glutamate + ATP = N-acetyl-L-glutamyl 5-phosphate + ADP. The protein operates within amino-acid biosynthesis; L-arginine biosynthesis; N(2)-acetyl-L-ornithine from L-glutamate: step 2/4. Catalyzes the ATP-dependent phosphorylation of N-acetyl-L-glutamate. In Halalkalibacterium halodurans (strain ATCC BAA-125 / DSM 18197 / FERM 7344 / JCM 9153 / C-125) (Bacillus halodurans), this protein is Acetylglutamate kinase.